Here is a 383-residue protein sequence, read N- to C-terminus: S-adenosylmethionine synthase (383 aa).

Residue histidine 15 participates in ATP binding. Aspartate 17 contributes to the Mg(2+) binding site. Residue glutamate 43 coordinates K(+). 2 residues coordinate L-methionine: glutamate 56 and glutamine 99. The segment at 99–109 (QSPDINQGVDR) is flexible loop. Residues 164–166 (DAK), 230–231 (RF), aspartate 239, 245–246 (RK), alanine 262, and lysine 266 contribute to the ATP site. Position 239 (aspartate 239) interacts with L-methionine. Lysine 270 serves as a coordination point for L-methionine.

It belongs to the AdoMet synthase family. As to quaternary structure, homotetramer; dimer of dimers. Requires Mg(2+) as cofactor. K(+) serves as cofactor.

Its subcellular location is the cytoplasm. It carries out the reaction L-methionine + ATP + H2O = S-adenosyl-L-methionine + phosphate + diphosphate. It participates in amino-acid biosynthesis; S-adenosyl-L-methionine biosynthesis; S-adenosyl-L-methionine from L-methionine: step 1/1. Its function is as follows. Catalyzes the formation of S-adenosylmethionine (AdoMet) from methionine and ATP. The overall synthetic reaction is composed of two sequential steps, AdoMet formation and the subsequent tripolyphosphate hydrolysis which occurs prior to release of AdoMet from the enzyme. The sequence is that of S-adenosylmethionine synthase from Shewanella putrefaciens (strain CN-32 / ATCC BAA-453).